The following is a 385-amino-acid chain: ATP phosphoribosyltransferase regulatory subunit (385 aa).

Belongs to the class-II aminoacyl-tRNA synthetase family. HisZ subfamily. As to quaternary structure, heteromultimer composed of HisG and HisZ subunits.

It localises to the cytoplasm. It participates in amino-acid biosynthesis; L-histidine biosynthesis; L-histidine from 5-phospho-alpha-D-ribose 1-diphosphate: step 1/9. In terms of biological role, required for the first step of histidine biosynthesis. May allow the feedback regulation of ATP phosphoribosyltransferase activity by histidine. The protein is ATP phosphoribosyltransferase regulatory subunit of Bordetella pertussis (strain Tohama I / ATCC BAA-589 / NCTC 13251).